Reading from the N-terminus, the 480-residue chain is tRNA-2-methylthio-N(6)-dimethylallyladenosine synthase (480 aa).

The MTTase N-terminal domain occupies arginine 31 to arginine 151. Residues cysteine 40, cysteine 76, cysteine 114, cysteine 192, cysteine 196, and cysteine 199 each coordinate [4Fe-4S] cluster. Residues serine 178–alanine 410 enclose the Radical SAM core domain. A TRAM domain is found at aspartate 413–glutamine 475.

Belongs to the methylthiotransferase family. MiaB subfamily. Monomer. [4Fe-4S] cluster is required as a cofactor.

The protein resides in the cytoplasm. The enzyme catalyses N(6)-dimethylallyladenosine(37) in tRNA + (sulfur carrier)-SH + AH2 + 2 S-adenosyl-L-methionine = 2-methylsulfanyl-N(6)-dimethylallyladenosine(37) in tRNA + (sulfur carrier)-H + 5'-deoxyadenosine + L-methionine + A + S-adenosyl-L-homocysteine + 2 H(+). Catalyzes the methylthiolation of N6-(dimethylallyl)adenosine (i(6)A), leading to the formation of 2-methylthio-N6-(dimethylallyl)adenosine (ms(2)i(6)A) at position 37 in tRNAs that read codons beginning with uridine. This Gluconacetobacter diazotrophicus (strain ATCC 49037 / DSM 5601 / CCUG 37298 / CIP 103539 / LMG 7603 / PAl5) protein is tRNA-2-methylthio-N(6)-dimethylallyladenosine synthase.